A 546-amino-acid chain; its full sequence is CTP synthase (546 aa).

The amidoligase domain stretch occupies residues 1–266 (MTTRYIFVTG…DDLVVKRFGL (266 aa)). Position 14 (Ser-14) interacts with CTP. Ser-14 serves as a coordination point for UTP. ATP-binding positions include 15-20 (SLGKGI) and Asp-72. 2 residues coordinate Mg(2+): Asp-72 and Glu-140. Residues 147–149 (DIE), 187–192 (KTKPTQ), and Lys-223 contribute to the CTP site. UTP is bound by residues 187 to 192 (KTKPTQ) and Lys-223. 239–241 (KDV) lines the ATP pocket. Positions 291 to 542 (VIGMVGKYIE…VAAASAHQKR (252 aa)) constitute a Glutamine amidotransferase type-1 domain. Position 352 (Gly-352) interacts with L-glutamine. The active-site Nucleophile; for glutamine hydrolysis is Cys-379. L-glutamine contacts are provided by residues 380–383 (LGMQ), Glu-403, and Arg-470. Active-site residues include His-515 and Glu-517.

This sequence belongs to the CTP synthase family. In terms of assembly, homotetramer.

The catalysed reaction is UTP + L-glutamine + ATP + H2O = CTP + L-glutamate + ADP + phosphate + 2 H(+). The enzyme catalyses L-glutamine + H2O = L-glutamate + NH4(+). It carries out the reaction UTP + NH4(+) + ATP = CTP + ADP + phosphate + 2 H(+). The protein operates within pyrimidine metabolism; CTP biosynthesis via de novo pathway; CTP from UDP: step 2/2. Its activity is regulated as follows. Allosterically activated by GTP, when glutamine is the substrate; GTP has no effect on the reaction when ammonia is the substrate. The allosteric effector GTP functions by stabilizing the protein conformation that binds the tetrahedral intermediate(s) formed during glutamine hydrolysis. Inhibited by the product CTP, via allosteric rather than competitive inhibition. Functionally, catalyzes the ATP-dependent amination of UTP to CTP with either L-glutamine or ammonia as the source of nitrogen. Regulates intracellular CTP levels through interactions with the four ribonucleotide triphosphates. The chain is CTP synthase from Shewanella sp. (strain ANA-3).